We begin with the raw amino-acid sequence, 221 residues long: Esterase C25G4.2 (221 aa).

Catalysis depends on charge relay system residues Ser-106, Asp-166, and His-194.

Belongs to the LovG family.

The sequence is that of Esterase C25G4.2 from Caenorhabditis elegans.